The chain runs to 96 residues: Conantokin Rl-B (96 aa).

The first 21 residues, 1-21 (MQLYTYLYLLVPLVTFHLILG), serve as a signal peptide directing secretion. Residues 22-78 (TGTLDHGDALTERRSTDATALKPEPVLLQKSSARSTNDNGKDTQMKRILKKRGNKAR) constitute a propeptide that is removed on maturation. The interval 51 to 96 (KSSARSTNDNGKDTQMKRILKKRGNKARGEEELAEKAPEFARELAN) is disordered. Over residues 77 to 96 (ARGEEELAEKAPEFARELAN) the composition is skewed to basic and acidic residues. Glu81 is a binding site for a divalent metal cation. 3 positions are modified to 4-carboxyglutamate: Glu81, Glu82, and Glu85. Glu85 serves as a coordination point for a divalent metal cation. Pro88 is subject to 4-hydroxyproline. A divalent metal cation-binding residues include Glu89 and Glu93. 4-carboxyglutamate occurs at positions 89 and 93. Position 96 is an asparagine amide (Asn96).

This sequence belongs to the conotoxin B superfamily. Requires Ca(2+) as cofactor. Mg(2+) is required as a cofactor. Hydroxylation of Pro-88 is important for NR2B/GRIN2B NMDA receptor selectivity. Removal of hydroxylation does not change global NMDA receptor antagonism (tested on WT neurons), but it decreases the inhibitory potency on NR2B/GRIN2B NMDA receptors and increases the inhibitory potency on NR2A/GRIN2A NMDA receptors. Hydroxylation of Pro-88 locally disrupts a small region of the divalent cation-induced alpha-helix but does not destabilize the entire helix. In terms of tissue distribution, expressed by the venom duct.

Its subcellular location is the secreted. Functionally, conantokins inhibit N-methyl-D-aspartate (NMDA) receptors. This toxin has antagonist activity on the NR2B/GRIN2B subunit (IC(50)=0.1 uM). In vivo, when delivered into the brain, is active has anticonvulsant activity in the model of epilepsy in mice. The polypeptide is Conantokin Rl-B (Conus rolani (Cone snail)).